We begin with the raw amino-acid sequence, 430 residues long: MLHMNSLWGCFLFVLLAVTGAVQGLQEDYSEYAVYRFTSDNYSTLVRDVIAPLTDDYDVWTRSNNFIDIKLPKEIGEQINDGQVIIDNMNELIQNTLPTSQMMAREQAVFENDYDFFFNEYRDLDTIYMWLDLLERSFPSLVAVEHLGRTFEGRELKALHISGNKPESNPEKKTIVITGGIHAREWISVSTVCWALYQLLNRYGSSKKETKYLDDLDFLVIPVFNPDGYAYTWSHDRLWRKNRQRTHVPQCLGIDIDHSFGFQWEKAHTHACSEEYSGETPFEAWEASAWYKYINETKGDYKIYGYIDMHSYSQEILYPYAYSCDALPRDLENLLELSYGLSKAIRSKSGRNYDVISACKDRGSDIFPGLGAGSALDFMYHHRAHWAFQLKLRDTGNHGFLLPPENIKPVGKETYAALKYFCDFLLDPEI.

A signal peptide spans 1 to 24; that stretch reads MLHMNSLWGCFLFVLLAVTGAVQG. The propeptide occupies 25–105; sequence LQEDYSEYAV…TLPTSQMMAR (81 aa). Residue Asn-41 is glycosylated (N-linked (GlcNAc...) asparagine). A Peptidase M14 domain is found at 120 to 425; the sequence is EYRDLDTIYM…AALKYFCDFL (306 aa). 2 residues coordinate Zn(2+): His-182 and Glu-185. Residues 182 to 185, Arg-240, and 257 to 258 contribute to the substrate site; these read HARE and DH. A disulfide bridge links Cys-251 with Cys-272. Asn-295 carries N-linked (GlcNAc...) asparagine glycosylation. Zn(2+) is bound at residue His-310. 311-312 lines the substrate pocket; that stretch reads SY.

The protein belongs to the peptidase M14 family. Zn(2+) serves as cofactor. In terms of processing, N-glycosylated.

It localises to the vacuole. The protein resides in the secreted. Its function is as follows. Inactive carboxypeptidase that may play a role in cell wall organization and biogenesis. The sequence is that of Inactive metallocarboxypeptidase ECM14 from Saccharomyces cerevisiae (strain ATCC 204508 / S288c) (Baker's yeast).